Consider the following 137-residue polypeptide: TSC22 domain family protein 3 (137 aa).

The interval 1 to 60 (MNTEMYQTPMEVAVYQLHNFSISFFSSLLGGDVVSVKLDNSASGASVVALDNKIEQAMDL) is AP1-binding. Residues N40 and V73 each carry the phosphoserine modification. The leucine-zipper stretch occupies residues 76 to 97 (LKEQIRELLEKNSQLERENTLL). Residues 101–137 (ASPEQLEKFQSRLSPEEPAPEAPETPETPEAPGGSAV) are disordered. S102 bears the Phosphoserine mark. 2 positions are modified to phosphothreonine: T125 and T128. Residues 128–137 (TPEAPGGSAV) show a composition bias toward low complexity.

This sequence belongs to the TSC-22/Dip/Bun family. As to quaternary structure, can form homodimers, however it is likely to function as a monomer. Interacts with NFKB1. Interacts (via N-terminus) with JUN and FOS; these interactions inhibit the binding of active AP1 to its target DNA. Interacts with MYOD1. Interacts with HDAC1; this interaction affects HDAC1 activity on MYOG promoter and thus inhibits MYOD1 transcriptional activity. In terms of assembly, interacts with MYOD1. Expressed in T-cells. Expression inversely correlates with T-cell activation, being higher in resting cells and lower in cells activated by TCR/CD3 triggering (at protein level). Constitutively expressed in lung, intestine, kidney and liver, most probably by resident cells from the macrophage lineage. Expressed in thymus, lymph nodes, bone marrow, spleen, lung and skeletal muscle. In terms of tissue distribution, expressed in spleen and skeletal muscle (at protein level). Expressed in the cortex, medulla and papilla of the kidney. As to expression, expressed in the cortex, medulla and papilla of the kidney. Expressed in spleen and skeletal muscle (at protein level).

The protein localises to the cytoplasm. It localises to the nucleus. In terms of biological role, protects T-cells from IL2 deprivation-induced apoptosis through the inhibition of FOXO3A transcriptional activity that leads to the down-regulation of the pro-apoptotic factor BCL2L11. In macrophages, plays a role in the anti-inflammatory and immunosuppressive effects of glucocorticoids and IL10. In T-cells, inhibits anti-CD3-induced NFKB1 nuclear translocation and thereby NFKB1 DNA-binding activities. In vitro, suppresses AP-1 transcription factor complex DNA-binding activities. Inhibits myogenic differentiation and mediates anti-myogenic effects of glucocorticoids by binding and regulating MYOD1 and HDAC1 transcriptional activity resulting in reduced expression of MYOG. The chain is TSC22 domain family protein 3 from Mus musculus (Mouse).